The following is a 347-amino-acid chain: Very-long-chain 3-oxoacyl-CoA reductase (347 aa).

Residues 20 to 40 (LLWVVFGLGVLKCTTLSLRFL) form a helical membrane-spanning segment. The NADP(+) site is built by Asp120, Asn147, Tyr223, Lys227, Val256, and Ser258. Tyr223 (proton donor) is an active-site residue. The active-site Lowers pKa of active site Tyr is Lys227.

Belongs to the short-chain dehydrogenases/reductases (SDR) family. Interacts with the fatty acid elongation system components ELO3 and TSC13.

Its subcellular location is the endoplasmic reticulum membrane. It carries out the reaction a very-long-chain (3R)-3-hydroxyacyl-CoA + NADP(+) = a very-long-chain 3-oxoacyl-CoA + NADPH + H(+). The enzyme catalyses 3-oxooctadecanoyl-CoA + NADPH + H(+) = (3R)-hydroxyoctadecanoyl-CoA + NADP(+). It catalyses the reaction 3-oxoeicosanoyl-CoA + NADPH + H(+) = (3R)-hydroxyeicosanoyl-CoA + NADP(+). The catalysed reaction is 3-oxodocosanoyl-CoA + NADPH + H(+) = (3R)-hydroxydocosanoyl-CoA + NADP(+). It carries out the reaction 3-oxotetracosanoyl-CoA + NADPH + H(+) = (3R)-hydroxytetracosanoyl-CoA + NADP(+). The enzyme catalyses 3-oxohexacosanoyl-CoA + NADPH + H(+) = (3R)-hydroxyhexacosanoyl-CoA + NADP(+). The protein operates within lipid metabolism; fatty acid biosynthesis. Component of the microsomal membrane bound fatty acid elongation system, which produces the 26-carbon very long-chain fatty acids (VLCFA) from palmitate. Catalyzes the reduction of the 3-ketoacyl-CoA intermediate that is formed in each cycle of fatty acid elongation. VLCFAs serve as precursors for ceramide and sphingolipids. The chain is Very-long-chain 3-oxoacyl-CoA reductase (IFA38) from Saccharomyces cerevisiae (strain ATCC 204508 / S288c) (Baker's yeast).